Reading from the N-terminus, the 788-residue chain is MVECITPEAIFIGANKQTQVSDIHKVKKIVAFGAGKTIALWDPIEPNNKGVYATLKGHEAEVTCVRFVPDSDFMVSASEDHHVKIWKFTDYSHLQCIQTIQHYSKTIVALSALPSLISVGCADGTISIWRQNIQNDEFGLAHEFTIKKGFFYPLCLSLSKVEEKKYLLAIGGTNVNVFIASFILSDSGIEKCRVVAELEGHEDWVKSLAFRHQETPGDYLLCSGSQDRYIRLWRIRINDLIDDSEEDSKKLTLLSNKQYKFQIDDELRVGINFEALIMGHDDWISSLQWHESRLQLLAATADTSLMVWEPDETSGIWVCSLRLGEMSSKGASTATGSSGGFWSCLWFTHERMDFFLTNGKTGSWRMWATKDNIICDQRLGISGATKDVTDIAWSPSGEYLLATSLDQTTRLFAPWIYDASGRKREIATWHEFSRPQIHGYDMICVETVTDTRFVSGGDEKILRSFDLPKGVAGMLQKFVGIQFEEKSEMPDSATVPVLGLSNKAGEDDANEDDEEEEGGNKETPDITDPLSLLECPPMEDQLQRHLLWPEVEKLYGHGFEITCLDISPDQKLIASACRSNNVQNAVIRIFSTENWLEIKPALPFHSLTITRLKFSKDGKFLLSVCRDRKWALWERNMEDNTFELRFKNEKPHTRIIWDADWAPLEFGNVFVTASRDKTVKVWRHQKEPADDYVLEASIKHTKAVTAISIHDSMIREKILISVGLENGEIYLYSYTLGKFELITQLNEDITPADKITRLRWSHLKRNGKLFLGVGSSDLSTRIYSLAYE.

8 WD repeats span residues 13–51, 57–96, 102–139, 200–243, 279–318, 336–377, 383–422, and 437–475; these read GANK…NKGV, GHEA…HLQC, HYSK…DEFG, GHED…LIDD, GHDD…GIWV, GSSG…ICDQ, GATK…ASGR, and IHGY…AGML. The tract at residues 490–530 is disordered; the sequence is PDSATVPVLGLSNKAGEDDANEDDEEEEGGNKETPDITDPL. S492 carries the post-translational modification Phosphoserine. Positions 507–517 are enriched in acidic residues; sequence DDANEDDEEEE. 5 WD repeats span residues 556-600, 604-643, 651-692, 699-742, and 750-788; these read GHGF…EIKP, FHSL…NTFE, PHTR…ADDY, KHTK…FELI, and TPAD…LAYE.

This sequence belongs to the WD repeat ELP2 family. In terms of assembly, component of the elongator complex which consists of ELP1/IKI3, ELP2, ELP3, ELP4, ELP5/IKI1 and ELP6. The elongator complex is composed of two copies of the Elp123 subcomplex (composed of ELP1/IKI3, ELP2 and ELP3) and two copies of the Elp456 subcomplex (composed of ELP4, ELP5/IKI1 and ELP6). The Elp123 subcomplex forms a two-lobed scaffold, which binds the Elp456 subcomplex asymmetrically. In the complex, ELP2 interacts with ELP1/IKI3. In each lobe, ELP2 is tightly sandwiched between ELP1/IKI3 and ELP3. The Elp123 subcomplex binds tRNA through ELP1/IKI3 and ELP3 and can bind 2 tRNAs simultaneously. tRNA-binding induces conformational rearrangements which precisely position the targeted anticodon base in the active site. The Elp456 subcomplex binds tRNA and has ATPase activity. Interacts with KTI11/DPH3.

Its subcellular location is the cytoplasm. It is found in the nucleus. Its pathway is tRNA modification; 5-methoxycarbonylmethyl-2-thiouridine-tRNA biosynthesis. In terms of biological role, component of the elongator complex, a multiprotein complex which is required for multiple tRNA modifications, including mcm5U (5-methoxycarbonylmethyl uridine), mcm5s2U (5-methoxycarbonylmethyl-2-thiouridine), and ncm5U (5-carbamoylmethyl uridine). The elongator complex catalyzes formation of carboxymethyluridine in the wobble base at position 34 in tRNAs. It functions as a gamma-toxin target (TOT); disruption of the complex confers resistance to Kluyveromyces lactis toxin zymocin (pGKL1 killer toxin). May also be involved in sensitivity to Pichia inositovora toxin. ELP2 binds to microtubules. Independently, ELP2 may be involved in polarized exocytosis. The chain is Elongator complex protein 2 (ELP2) from Saccharomyces cerevisiae (strain ATCC 204508 / S288c) (Baker's yeast).